The sequence spans 501 residues: Endonuclease domain-containing 1 protein (501 aa).

The first 21 residues, Met1 to Ala21, serve as a signal peptide directing secretion. At Lys408 the chain carries N6-acetyllysine.

This sequence belongs to the DNA/RNA non-specific endonuclease family. In terms of assembly, interacts with RNF26; this interaction is important to modulate innate immune signaling through the cGAS-STING pathway.

Its subcellular location is the secreted. May act as a DNase and a RNase. Plays a role in the modulation of innate immune signaling through the cGAS-STING pathway by interacting with RNF26. This is Endonuclease domain-containing 1 protein (Endod1) from Mus musculus (Mouse).